Reading from the N-terminus, the 236-residue chain is Thiamine import ATP-binding protein ThiQ (236 aa).

In terms of domain architecture, ABC transporter spans 2–230 (LKLEKITYLY…SAAKASVLGI (229 aa)). Residue 32–39 (GPSGAGKS) coordinates ATP.

It belongs to the ABC transporter superfamily. Thiamine importer (TC 3.A.1.19.1) family. In terms of assembly, the complex is composed of two ATP-binding proteins (ThiQ), two transmembrane proteins (ThiP) and a solute-binding protein (ThiB).

It is found in the cell inner membrane. It catalyses the reaction thiamine(out) + ATP + H2O = thiamine(in) + ADP + phosphate + H(+). In terms of biological role, part of the ABC transporter complex ThiBPQ involved in thiamine import. Responsible for energy coupling to the transport system. The protein is Thiamine import ATP-binding protein ThiQ of Yersinia pseudotuberculosis serotype I (strain IP32953).